We begin with the raw amino-acid sequence, 355 residues long: D-alanine--D-alanine ligase (355 aa).

The ATP-grasp domain maps to 143–350; that stretch reads KTIFSNHKLP…IEQLVAKLVD (208 aa). 178–233 contributes to the ATP binding site; the sequence is LKKLKFPVFVKPSNSGSSLGISKVKNESEILLALEKAWGIDPRILIEEGLEVREIE. Asp-303, Glu-317, and Asn-319 together coordinate Mg(2+).

It belongs to the D-alanine--D-alanine ligase family. Mg(2+) serves as cofactor. Mn(2+) is required as a cofactor.

The protein localises to the cytoplasm. The enzyme catalyses 2 D-alanine + ATP = D-alanyl-D-alanine + ADP + phosphate + H(+). Its pathway is cell wall biogenesis; peptidoglycan biosynthesis. Functionally, cell wall formation. The protein is D-alanine--D-alanine ligase of Prochlorococcus marinus (strain MIT 9301).